A 192-amino-acid polypeptide reads, in one-letter code: Fe/S biogenesis protein NfuA (192 aa).

[4Fe-4S] cluster contacts are provided by Cys149 and Cys152.

This sequence belongs to the NfuA family. As to quaternary structure, homodimer. [4Fe-4S] cluster is required as a cofactor.

In terms of biological role, involved in iron-sulfur cluster biogenesis. Binds a 4Fe-4S cluster, can transfer this cluster to apoproteins, and thereby intervenes in the maturation of Fe/S proteins. Could also act as a scaffold/chaperone for damaged Fe/S proteins. This chain is Fe/S biogenesis protein NfuA, found in Aeromonas hydrophila subsp. hydrophila (strain ATCC 7966 / DSM 30187 / BCRC 13018 / CCUG 14551 / JCM 1027 / KCTC 2358 / NCIMB 9240 / NCTC 8049).